The primary structure comprises 676 residues: DNA-directed RNA polymerase subunit beta' (676 aa).

Cys69, Cys71, Cys87, and Cys90 together coordinate Zn(2+). Asp485, Asp487, and Asp489 together coordinate Mg(2+).

It belongs to the RNA polymerase beta' chain family. RpoC1 subfamily. As to quaternary structure, in plastids the minimal PEP RNA polymerase catalytic core is composed of four subunits: alpha, beta, beta', and beta''. When a (nuclear-encoded) sigma factor is associated with the core the holoenzyme is formed, which can initiate transcription. It depends on Mg(2+) as a cofactor. Zn(2+) serves as cofactor.

The protein resides in the plastid. It is found in the chloroplast. It carries out the reaction RNA(n) + a ribonucleoside 5'-triphosphate = RNA(n+1) + diphosphate. Functionally, DNA-dependent RNA polymerase catalyzes the transcription of DNA into RNA using the four ribonucleoside triphosphates as substrates. This Fagopyrum esculentum subsp. ancestrale (Wild buckwheat) protein is DNA-directed RNA polymerase subunit beta'.